We begin with the raw amino-acid sequence, 29 residues long: Glucagon (29 aa).

Belongs to the glucagon family.

The protein localises to the secreted. Promotes hydrolysis of glycogen and lipids, and raises the blood sugar level. The polypeptide is Glucagon (gcg) (Torpedo marmorata (Marbled electric ray)).